Here is a 216-residue protein sequence, read N- to C-terminus: Thymidylate kinase (216 aa).

10-17 (GIDGCGKT) contacts ATP.

The protein belongs to the thymidylate kinase family.

The enzyme catalyses dTMP + ATP = dTDP + ADP. Phosphorylation of dTMP to form dTDP in both de novo and salvage pathways of dTTP synthesis. This Prochlorococcus marinus (strain MIT 9303) protein is Thymidylate kinase.